The sequence spans 306 residues: Pantothenate kinase (306 aa).

Residue 91–98 participates in ATP binding; that stretch reads GSVAVGKS.

It belongs to the prokaryotic pantothenate kinase family.

The protein resides in the cytoplasm. It carries out the reaction (R)-pantothenate + ATP = (R)-4'-phosphopantothenate + ADP + H(+). It functions in the pathway cofactor biosynthesis; coenzyme A biosynthesis; CoA from (R)-pantothenate: step 1/5. The chain is Pantothenate kinase from Streptococcus thermophilus (strain ATCC BAA-491 / LMD-9).